Reading from the N-terminus, the 361-residue chain is Phospho-N-acetylmuramoyl-pentapeptide-transferase (361 aa).

A run of 10 helical transmembrane segments spans residues 25 to 45, 73 to 93, 98 to 118, 139 to 159, 168 to 188, 200 to 220, 237 to 257, 264 to 284, 289 to 309, and 339 to 359; these read RGIL…PAVI, TMGG…WGDL, VWLV…DDWI, IFGL…AAIT, IALP…IVGF, GLAI…AYAS, AGEL…FLWF, VFMG…VAVI, LVLV…MIQV, and VIVR…ATLK.

It belongs to the glycosyltransferase 4 family. MraY subfamily. Mg(2+) is required as a cofactor.

Its subcellular location is the cell inner membrane. The catalysed reaction is UDP-N-acetyl-alpha-D-muramoyl-L-alanyl-gamma-D-glutamyl-meso-2,6-diaminopimeloyl-D-alanyl-D-alanine + di-trans,octa-cis-undecaprenyl phosphate = di-trans,octa-cis-undecaprenyl diphospho-N-acetyl-alpha-D-muramoyl-L-alanyl-D-glutamyl-meso-2,6-diaminopimeloyl-D-alanyl-D-alanine + UMP. The protein operates within cell wall biogenesis; peptidoglycan biosynthesis. Functionally, catalyzes the initial step of the lipid cycle reactions in the biosynthesis of the cell wall peptidoglycan: transfers peptidoglycan precursor phospho-MurNAc-pentapeptide from UDP-MurNAc-pentapeptide onto the lipid carrier undecaprenyl phosphate, yielding undecaprenyl-pyrophosphoryl-MurNAc-pentapeptide, known as lipid I. This chain is Phospho-N-acetylmuramoyl-pentapeptide-transferase, found in Xanthomonas campestris pv. campestris (strain 8004).